Consider the following 438-residue polypeptide: chitinase-like effector (438 aa).

The N-terminal stretch at 1 to 23 (MFTPLSSVTALLALSSAFLGAQA) is a signal peptide. Residues 54 to 437 (FIAKGYYTGW…DAIRSGAGLS (384 aa)) enclose the GH18 domain. W416 contacts chitin.

The protein belongs to the glycosyl hydrolase 18 family.

The protein resides in the secreted. Its function is as follows. Catalytically impaired chitinase that binds efficiently to chitin, but not to chitosan, xylan, or cellulose. Despite the lack of chitinolytic activity, retains substrate binding specificity and acts as an effector to prevent chitin-triggered immunity by sequestering immunogenic chitin fragments. Does not function in the protection of fungal cell wall against plant hydrolytic enzymes. The sequence is that of chitinase-like effector from Moniliophthora perniciosa (Witches'-broom disease fungus).